Here is a 458-residue protein sequence, read N- to C-terminus: MSTGKIIQVIGAVIDVEFARDNTPKVYDALNVVEAGLVLEVQQQIGDGVVRTIAMGSSDGLRRGMEVKNTNAPISVPVGHGTLGRIMNVLGEPIDEAGPIEYTEKRSIHQAPPAYDELALSTEILETGIKVVDLICPFAKGGKVGLFGGAGVGKTVTMMELINNIAKEHSGYSVFAGVGERTREGNDFYYEMKDSNVLDKVSLVYGQMNEPPGNRLRVALSGLTIAEGFRDEKRDVLMFIDNIYRYTLAGTEVSALLGRMPSAVGYQPTLAAEMGALQERITSTKTGSITSVQAVYVPADDLTDPSPATTFSHLDATIVLSRQIAELGIYPAVDPLDSTSRQLDPLVVGQDHYEIARAVQKVLQRYKELKDIIAILGMDELSDEDKKIVDRARKIQRFLSQPFHVAEVFTGNPGKFVSLKDTVASFKAIVNGEYDHLPEQAFYMVGSIQEAIEKAKTL.

148 to 155 (GGAGVGKT) provides a ligand contact to ATP.

This sequence belongs to the ATPase alpha/beta chains family. F-type ATPases have 2 components, CF(1) - the catalytic core - and CF(0) - the membrane proton channel. CF(1) has five subunits: alpha(3), beta(3), gamma(1), delta(1), epsilon(1). CF(0) has three main subunits: a(1), b(2) and c(9-12). The alpha and beta chains form an alternating ring which encloses part of the gamma chain. CF(1) is attached to CF(0) by a central stalk formed by the gamma and epsilon chains, while a peripheral stalk is formed by the delta and b chains.

It is found in the cell inner membrane. The enzyme catalyses ATP + H2O + 4 H(+)(in) = ADP + phosphate + 5 H(+)(out). Functionally, produces ATP from ADP in the presence of a proton gradient across the membrane. The catalytic sites are hosted primarily by the beta subunits. The polypeptide is ATP synthase subunit beta (Francisella tularensis subsp. mediasiatica (strain FSC147)).